The following is a 462-amino-acid chain: Ribosomal oxygenase 2 (462 aa).

Residues 1-24 (MPKKARPAGDGKEQGPAPKQVKVE) are disordered. In terms of domain architecture, JmjC spans 139–271 (QPQRFKDELW…SSWGDFLLDT (133 aa)). 3 residues coordinate Fe cation: histidine 179, aspartate 181, and histidine 240. Phosphoserine is present on serine 308.

The protein belongs to the ROX family. MINA53 subfamily. Fe(2+) serves as cofactor.

The protein resides in the nucleus. It localises to the nucleolus. The enzyme catalyses L-histidyl-[ribosomal protein uL15] + 2-oxoglutarate + O2 = (3S)-3-hydroxy-L-histidyl-[ribosomal protein uL15] + succinate + CO2. It catalyses the reaction L-histidyl-[protein] + 2-oxoglutarate + O2 = (3S)-3-hydroxy-L-histidyl-[protein] + succinate + CO2. Its function is as follows. Oxygenase that can act as both a histone lysine demethylase and a ribosomal histidine hydroxylase. Is involved in the demethylation of trimethylated 'Lys-9' on histone H3 (H3K9me3), leading to an increase in ribosomal RNA expression. Also catalyzes the hydroxylation of 60S ribosomal protein L27a on 'His-39'. May play an important role in cell growth and survival. May be involved in ribosome biogenesis, most likely during the assembly process of pre-ribosomal particles. The protein is Ribosomal oxygenase 2 (RIOX2) of Bos taurus (Bovine).